A 364-amino-acid chain; its full sequence is Guanine nucleotide-binding protein alpha-8 subunit (364 aa).

The N-myristoyl glycine moiety is linked to residue glycine 2. The S-palmitoyl cysteine moiety is linked to residue cysteine 5. Residues 38–364 (KILKLLILGP…QHTMQKVGIQ (327 aa)) enclose the G-alpha domain. The interval 41–54 (KLLILGPGESGKST) is G1 motif. Residues 46–53 (GPGESGKS), 186–192 (LKSRVPT), 211–215 (DVGGQ), 280–283 (NKID), and alanine 336 each bind GTP. Mg(2+) contacts are provided by serine 53 and threonine 192. The G2 motif stretch occupies residues 184–192 (DILKSRVPT). A G3 motif region spans residues 207-216 (FKIFDVGGQR). The G4 motif stretch occupies residues 276-283 (ILFLNKID). Residues 334-339 (TCATDT) are G5 motif.

This sequence belongs to the G-alpha family. As to quaternary structure, g proteins are composed of 3 units; alpha, beta and gamma. The alpha chain contains the guanine nucleotide binding site.

In terms of biological role, guanine nucleotide-binding proteins (G proteins) are involved as modulators or transducers in various transmembrane signaling systems. The chain is Guanine nucleotide-binding protein alpha-8 subunit (gpa-8) from Caenorhabditis briggsae.